A 188-amino-acid polypeptide reads, in one-letter code: dCTP deaminase (188 aa).

109 to 114 (KSTYAR) is a binding site for dCTP. Glu-135 serves as the catalytic Proton donor/acceptor. DCTP contacts are provided by Gln-154, Tyr-168, and Gln-178.

This sequence belongs to the dCTP deaminase family. Homotrimer.

The enzyme catalyses dCTP + H2O + H(+) = dUTP + NH4(+). Its pathway is pyrimidine metabolism; dUMP biosynthesis; dUMP from dCTP (dUTP route): step 1/2. Its function is as follows. Catalyzes the deamination of dCTP to dUTP. The protein is dCTP deaminase of Helicobacter pylori (strain J99 / ATCC 700824) (Campylobacter pylori J99).